A 301-amino-acid polypeptide reads, in one-letter code: MICKTQKLNNGKEIPTVGLGTWGMEDEAVLEGAIRNALSLGYRHIDTAFIYGNEKMIGNILKKLFDEGVVQRKDLFITSKLWNTFHGCPEDGLRRSLNDLQMDYVDLYLIHWPVTFDPAPDGTVESCGKKYNVGKFDAVGVWKKMEALVDLGLAKSIGISNFGKANTEKILGTCRICPAAIQIELHPYLNQKELVEFMKSKGIQVISYSSLGSAPGSSAKVRDDKTIKAIAKKYGCAPSQIILSYITAQGICVIPKSRSKEHLRENIDLKELSREDISAIDALNTGHRYVDPPGFGPEKFK.

Residue G11 to G20 coordinates NADP(+). Residue Y51 is the Proton donor of the active site. Residue H111 participates in substrate binding. NADP(+) is bound at residue S209 to N266.

It belongs to the aldo/keto reductase family.

It localises to the cytoplasm. The catalysed reaction is an alditol + NAD(+) = an aldose + NADH + H(+). The enzyme catalyses an alditol + NADP(+) = an aldose + NADPH + H(+). Catalyzes the NADPH-dependent reduction of a wide variety of carbonyl-containing compounds to their corresponding alcohols with a broad range of catalytic efficiencies. The polypeptide is Aldose reductase (Encephalitozoon cuniculi (strain GB-M1) (Microsporidian parasite)).